The primary structure comprises 399 residues: Chalcone synthase 2 (399 aa).

The active site involves C166.

The protein belongs to the thiolase-like superfamily. Chalcone/stilbene synthases family.

It catalyses the reaction (E)-4-coumaroyl-CoA + 3 malonyl-CoA + 3 H(+) = 2',4,4',6'-tetrahydroxychalcone + 3 CO2 + 4 CoA. Its pathway is secondary metabolite biosynthesis; flavonoid biosynthesis. Functionally, the primary product of this enzyme is 4,2',4',6'-tetrahydroxychalcone (also termed naringenin-chalcone or chalcone) which can under specific conditions spontaneously isomerize into naringenin. Substrate preference is feruloyl-CoA = caffeoyl-CoA &gt;&gt; cinnamoyl-CoA. The protein is Chalcone synthase 2 (CHS2) of Hordeum vulgare (Barley).